A 79-amino-acid chain; its full sequence is Dolichyl-diphosphooligosaccharide--protein glycosyltransferase subunit TMEM258 (79 aa).

Helical transmembrane passes span 17-37 (VFPH…AWFF) and 55-75 (LISL…LLWV).

Belongs to the OST5 family. Component of the oligosaccharyltransferase (OST) complex.

It localises to the membrane. Its subcellular location is the endoplasmic reticulum. The protein localises to the cytoplasm. It functions in the pathway protein modification; protein glycosylation. Functionally, subunit of the oligosaccharyl transferase (OST) complex that catalyzes the initial transfer of a defined glycan (Glc(3)Man(9)GlcNAc(2) in eukaryotes) from the lipid carrier dolichol-pyrophosphate to an asparagine residue within an Asn-X-Ser/Thr consensus motif in nascent polypeptide chains, the first step in protein N-glycosylation. N-glycosylation occurs cotranslationally and the complex associates with the Sec61 complex at the channel-forming translocon complex that mediates protein translocation across the endoplasmic reticulum (ER). All subunits are required for a maximal enzyme activity. This Xenopus laevis (African clawed frog) protein is Dolichyl-diphosphooligosaccharide--protein glycosyltransferase subunit TMEM258.